A 126-amino-acid polypeptide reads, in one-letter code: MDALKQTKFDDKNLIPAIVQDFKTGDILMFAWMNQESLALTIEKQQAVYYSRSRKKLWFKGEQSGHTQLIKEIFTDCDNDVILLRVDQVGGIACHTGRKSCFFQQLDKNNWKTVANVLKNPKDIYE.

D76 is a Mg(2+) binding site. A Zn(2+)-binding site is contributed by C77. Residues D78 and D80 each contribute to the Mg(2+) site. Zn(2+) contacts are provided by C94 and C101.

This sequence belongs to the PRA-CH family. In terms of assembly, homodimer. Mg(2+) serves as cofactor. It depends on Zn(2+) as a cofactor.

It localises to the cytoplasm. It carries out the reaction 1-(5-phospho-beta-D-ribosyl)-5'-AMP + H2O = 1-(5-phospho-beta-D-ribosyl)-5-[(5-phospho-beta-D-ribosylamino)methylideneamino]imidazole-4-carboxamide. It participates in amino-acid biosynthesis; L-histidine biosynthesis; L-histidine from 5-phospho-alpha-D-ribose 1-diphosphate: step 3/9. Its function is as follows. Catalyzes the hydrolysis of the adenine ring of phosphoribosyl-AMP. The protein is Phosphoribosyl-AMP cyclohydrolase of Ruthia magnifica subsp. Calyptogena magnifica.